The following is a 397-amino-acid chain: Phosphoglycerate kinase (397 aa).

Residues 25–27 (DLN), R41, 64–67 (HLGR), R118, and R151 each bind substrate. ATP contacts are provided by residues K202, E324, and 350–353 (GGDT).

It belongs to the phosphoglycerate kinase family. Monomer.

Its subcellular location is the cytoplasm. The catalysed reaction is (2R)-3-phosphoglycerate + ATP = (2R)-3-phospho-glyceroyl phosphate + ADP. Its pathway is carbohydrate degradation; glycolysis; pyruvate from D-glyceraldehyde 3-phosphate: step 2/5. This chain is Phosphoglycerate kinase, found in Albidiferax ferrireducens (strain ATCC BAA-621 / DSM 15236 / T118) (Rhodoferax ferrireducens).